Here is a 941-residue protein sequence, read N- to C-terminus: Endoglucanase (941 aa).

Positions 1 to 29 (MKIKQIKQSLSLLLIITLIMSLFVPMASA) are cleaved as a signal peptide. 3 SLH domains span residues 37 to 94 (NAFP…GLEA), 95 to 158 (SSKD…LSLP), and 161 to 224 (QREY…DYLY). Glu373 (proton donor) is an active-site residue. Glu485 acts as the Nucleophile in catalysis.

The protein belongs to the glycosyl hydrolase 5 (cellulase A) family.

It catalyses the reaction Endohydrolysis of (1-&gt;4)-beta-D-glucosidic linkages in cellulose, lichenin and cereal beta-D-glucans.. The polypeptide is Endoglucanase (Bacillus sp. (strain KSM-635)).